We begin with the raw amino-acid sequence, 101 residues long: Ubiquitin-related modifier 1 (101 aa).

G101 carries the post-translational modification 1-thioglycine. G101 is covalently cross-linked (Glycyl lysine isopeptide (Gly-Lys) (interchain with K-? in acceptor proteins)).

Belongs to the URM1 family. In terms of processing, C-terminal thiocarboxylation occurs in 2 steps, it is first acyl-adenylated (-COAMP) via the hesA/moeB/thiF part of UBA4, then thiocarboxylated (-COSH) via the rhodanese domain of UBA4.

The protein localises to the cytoplasm. It participates in tRNA modification; 5-methoxycarbonylmethyl-2-thiouridine-tRNA biosynthesis. In terms of biological role, acts as a sulfur carrier required for 2-thiolation of mcm(5)S(2)U at tRNA wobble positions of cytosolic tRNA(Lys), tRNA(Glu) and tRNA(Gln). Serves as sulfur donor in tRNA 2-thiolation reaction by being thiocarboxylated (-COSH) at its C-terminus by the MOCS3 homolog UBA4. The sulfur is then transferred to tRNA to form 2-thiolation of mcm(5)S(2)U. Prior mcm(5) tRNA modification by the elongator complex is required for 2-thiolation. Also acts as a ubiquitin-like protein (UBL) that is covalently conjugated via an isopeptide bond to lysine residues of target proteins such as AHP1. The thiocarboxylated form serves as substrate for conjugation and oxidative stress specifically induces the formation of UBL-protein conjugates. This is Ubiquitin-related modifier 1 from Scheffersomyces stipitis (strain ATCC 58785 / CBS 6054 / NBRC 10063 / NRRL Y-11545) (Yeast).